A 432-amino-acid polypeptide reads, in one-letter code: D-amino acid dehydrogenase (432 aa).

Val3–Tyr17 contacts FAD.

It belongs to the DadA oxidoreductase family. It depends on FAD as a cofactor.

The enzyme catalyses a D-alpha-amino acid + A + H2O = a 2-oxocarboxylate + AH2 + NH4(+). Its pathway is amino-acid degradation; D-alanine degradation; NH(3) and pyruvate from D-alanine: step 1/1. In terms of biological role, oxidative deamination of D-amino acids. This is D-amino acid dehydrogenase from Azotobacter vinelandii (strain DJ / ATCC BAA-1303).